We begin with the raw amino-acid sequence, 856 residues long: Leucine--tRNA ligase (856 aa).

A 'HIGH' region motif is present at residues 53 to 63 (PYPSGNLHMGH). Positions 622-626 (KMSKS) match the 'KMSKS' region motif. Lys625 lines the ATP pocket.

It belongs to the class-I aminoacyl-tRNA synthetase family.

Its subcellular location is the cytoplasm. The enzyme catalyses tRNA(Leu) + L-leucine + ATP = L-leucyl-tRNA(Leu) + AMP + diphosphate. The protein is Leucine--tRNA ligase of Prochlorococcus marinus (strain MIT 9215).